The chain runs to 1855 residues: Collagen alpha-1(XXVII) chain (1855 aa).

The first 48 residues, 1–48, serve as a signal peptide directing secretion; that stretch reads MGLARATAGLGPCCPPAPALLGAGLRWGGFLFAWILVSFSCHLASTQG. A propeptide spans 49-618 (N-terminal propeptide); that stretch reads APEDVDVLQR…PEPTPFLMLM (570 aa). The 166-residue stretch at 81 to 246 folds into the Laminin G-like domain; the sequence is PSGFIFTQRA…NYCAHLRERC (166 aa). N-linked (GlcNAc...) asparagine glycans are attached at residues Asn281 and Asn349. 4 disordered regions span residues 317-428, 511-580, 617-787, and 838-1617; these read DVSK…SATV, PPLG…SQLS, LMGP…GFPG, and GGVG…HPVQ. Composition is skewed to polar residues over residues 382-427 and 520-532; these read LSVT…SSAT and MMPS…STPA. Over residues 563–573 the composition is skewed to basic and acidic residues; it reads TARDASPRDLT. Collagen-like domains follow at residues 619-673, 682-741, 751-810, 826-885, 886-945, 946-1005, 1006-1047, 1048-1105, 1108-1155, 1156-1215, 1216-1275, 1276-1330, and 1334-1393; these read GPPG…GDPG, GAKG…PGPV, GYIG…PGPP, GYPG…PGPM, GKAG…EGPM, GPPG…VGEK, GDRG…PGSR, GLPG…GAKG, GIPG…PGLP, GDSG…KGQE, GLKG…PGTP, GPKG…GEDG, and GAPG…KGSK. Residues 619 to 1612 form a triple-helical region region; that stretch reads GPPGSKGDCG…RGRPGPPGPP (994 aa). Residues 630–663 show a composition bias toward pro residues; that stretch reads PGPPGLPGLPGSPGPRGPRGPPGPFGNPGLPGPP. Positions 708 to 728 are enriched in low complexity; the sequence is PGAAGHPGEQGQPGPEGSPGA. Residues 905–918 are compositionally biased toward low complexity; sequence FPGDIGPPGDNGPE. Residues 1027-1036 are compositionally biased toward gly residues; it reads GTPGGVGDPG. Composition is skewed to low complexity over residues 1083–1095, 1121–1131, and 1161–1176; these read RGRP…QGAA, LPGEPGSQGPQ, and KGDL…QGLI. 3 stretches are compositionally biased toward basic and acidic residues: residues 1196-1221, 1320-1332, and 1344-1354; these read LKGD…KGEE, KGEK…DGKT, and PVGDRGDRGEP. Low complexity-rich tracts occupy residues 1369 to 1378 and 1404 to 1431; these read RGEPGQQGQP and KAGA…RQGP. Collagen-like domains follow at residues 1433 to 1492, 1493 to 1552, and 1553 to 1612; these read GMAG…SGLP, GQLG…KGIQ, and GPRG…PGPP. Low complexity predominate over residues 1566–1581; it reads IIGPPGMLGPSGLPGP. Over residues 1597–1614 the composition is skewed to pro residues; it reads RGPPGPRGRPGPPGPPWH. Residues 1616–1855 constitute a propeptide, C-terminal propeptide; sequence VQFQQDDLEA…RLEVGPACFL (240 aa). One can recognise a Fibrillar collagen NC1 domain in the interval 1655-1855; the sequence is GEIFKTLHYL…RLEVGPACFL (201 aa). 3 disulfides stabilise this stretch: Cys1685–Cys1717, Cys1726–Cys1853, and Cys1762–Cys1806. 4 residues coordinate Ca(2+): Asp1703, Asn1705, Cys1708, and Asp1711. Asn1764 is a glycosylation site (N-linked (GlcNAc...) asparagine).

Belongs to the fibrillar collagen family.

The protein resides in the secreted. It localises to the extracellular space. Its subcellular location is the extracellular matrix. Its function is as follows. Plays a role during the calcification of cartilage and the transition of cartilage to bone. In Rattus norvegicus (Rat), this protein is Collagen alpha-1(XXVII) chain (Col27a1).